Reading from the N-terminus, the 57-residue chain is Potassium channel toxin alpha-KTx 17.2 (57 aa).

Positions 1 to 26 are cleaved as a signal peptide; that stretch reads MKTIIVLLLLTIVAAAVVESSPKARR. Intrachain disulfides connect C30–C46, C36–C51, and C40–C53.

It belongs to the short scorpion toxin superfamily. Potassium channel inhibitor family. Alpha-KTx 17 subfamily. Expressed by the venom gland.

Its subcellular location is the secreted. In terms of biological role, inhibits voltage-gated potassium channels. The sequence is that of Potassium channel toxin alpha-KTx 17.2 from Lychas mucronatus (Chinese swimming scorpion).